The primary structure comprises 315 residues: Methionyl-tRNA formyltransferase (315 aa).

113–116 contributes to the (6S)-5,6,7,8-tetrahydrofolate binding site; that stretch reads SLLP.

This sequence belongs to the Fmt family.

It catalyses the reaction L-methionyl-tRNA(fMet) + (6R)-10-formyltetrahydrofolate = N-formyl-L-methionyl-tRNA(fMet) + (6S)-5,6,7,8-tetrahydrofolate + H(+). Functionally, attaches a formyl group to the free amino group of methionyl-tRNA(fMet). The formyl group appears to play a dual role in the initiator identity of N-formylmethionyl-tRNA by promoting its recognition by IF2 and preventing the misappropriation of this tRNA by the elongation apparatus. This Erwinia tasmaniensis (strain DSM 17950 / CFBP 7177 / CIP 109463 / NCPPB 4357 / Et1/99) protein is Methionyl-tRNA formyltransferase.